The sequence spans 937 residues: AP-2 complex subunit beta (937 aa).

N-acetylthreonine is present on Thr2. Ser4 is subject to Phosphoserine. Lys265 carries the N6-acetyllysine modification. Phosphotyrosine is present on residues Tyr737 and Tyr928.

The protein belongs to the adaptor complexes large subunit family. Adapter protein complex 2 (AP-2) is a heterotetramer composed of two large adaptins (alpha-type subunit AP2A1 or AP2A2 and beta-type subunit AP2B1), a medium adaptin (mu-type subunit AP2M1) and a small adaptin (sigma-type subunit AP2S1). Interacts with EPN1. Interacts with EPS15; clathrin competes with EPS15. Interacts with SNAP91; clathrin competes with SNAP91. Interacts with CLTC; clathrin competes with EPS15, SNAP91 and PIP5K1C. Interacts with LDLRAP1. Interacts with AMPH and BIN1. Interacts with ARF6 (GDP-bound). Interacts (dephosphorylated at Tyr-737) with ARRB1; phosphorylation of AP2B1 at Tyr-737 disrupts the interaction. Interacts with SLC2A8. Interacts with SCYL1 and SCYL2. Interacts with TGFBR1 and TGFBR2. Interacts with PIP5K1C; clathrin competes with PIP5K1C. Interacts with DENND1B. Interacts with FCHO1. Interacts with RFTN1. Interacts with KIAA1107. Together with AP2A1 or AP2A2 and AP2M1, it interacts with ADAM10; this interaction facilitates ADAM10 endocytosis from the plasma membrane during long-term potentiation in hippocampal neurons. The N-terminus is blocked. In terms of processing, phosphorylation at Tyr-737 by SRC occurs at the plasma membrane in clathrin-coated vesicles (CCVs).

The protein resides in the cell membrane. Its subcellular location is the membrane. It is found in the coated pit. Its function is as follows. Component of the adaptor protein complex 2 (AP-2). Adaptor protein complexes function in protein transport via transport vesicles in different membrane traffic pathways. Adaptor protein complexes are vesicle coat components and appear to be involved in cargo selection and vesicle formation. AP-2 is involved in clathrin-dependent endocytosis in which cargo proteins are incorporated into vesicles surrounded by clathrin (clathrin-coated vesicles, CCVs) which are destined for fusion with the early endosome. The clathrin lattice serves as a mechanical scaffold but is itself unable to bind directly to membrane components. Clathrin-associated adaptor protein (AP) complexes which can bind directly to both the clathrin lattice and to the lipid and protein components of membranes are considered to be the major clathrin adaptors contributing the CCV formation. AP-2 also serves as a cargo receptor to selectively sort the membrane proteins involved in receptor-mediated endocytosis. AP-2 seems to play a role in the recycling of synaptic vesicle membranes from the presynaptic surface. AP-2 recognizes Y-X-X-[FILMV] (Y-X-X-Phi) and [ED]-X-X-X-L-[LI] endocytosis signal motifs within the cytosolic tails of transmembrane cargo molecules. AP-2 may also play a role in maintaining normal post-endocytic trafficking through the ARF6-regulated, non-clathrin pathway. During long-term potentiation in hippocampal neurons, AP-2 is responsible for the endocytosis of ADAM10. The AP-2 beta subunit acts via its C-terminal appendage domain as a scaffolding platform for endocytic accessory proteins; at least some clathrin-associated sorting proteins (CLASPs) are recognized by their [DE]-X(1,2)-F-X-X-[FL]-X-X-X-R motif. The AP-2 beta subunit binds to clathrin heavy chain, promoting clathrin lattice assembly; clathrin displaces at least some CLASPs from AP2B1 which probably then can be positioned for further coat assembly. This Bos taurus (Bovine) protein is AP-2 complex subunit beta (AP2B1).